The sequence spans 256 residues: Small ribosomal subunit protein uS3 (256 aa).

Positions 39–111 (IREFLNENFS…EVILNIIEVR (73 aa)) constitute a KH type-2 domain. Positions 219–256 (DTRKPFEAGNQKRGQKRRPRNDQPGQRPQQRNRNSKED) are disordered. Low complexity predominate over residues 240–250 (DQPGQRPQQRN).

Belongs to the universal ribosomal protein uS3 family. As to quaternary structure, part of the 30S ribosomal subunit. Forms a tight complex with proteins S10 and S14.

In terms of biological role, binds the lower part of the 30S subunit head. Binds mRNA in the 70S ribosome, positioning it for translation. The chain is Small ribosomal subunit protein uS3 from Acholeplasma laidlawii (strain PG-8A).